A 371-amino-acid polypeptide reads, in one-letter code: Bifunctional enzyme IspD/IspF (371 aa).

The tract at residues 1 to 214 (MNSCFIILAG…NSDIKFNNLI (214 aa)) is 2-C-methyl-D-erythritol 4-phosphate cytidylyltransferase. The segment at 215–371 (KFGIGFDVHR…EVIASVIKND (157 aa)) is 2-C-methyl-D-erythritol 2,4-cyclodiphosphate synthase. 2 residues coordinate a divalent metal cation: Asp-221 and His-223. 4-CDP-2-C-methyl-D-erythritol 2-phosphate contacts are provided by residues 221-223 (DVH) and 247-248 (HS). His-255 is an a divalent metal cation binding site. 4-CDP-2-C-methyl-D-erythritol 2-phosphate is bound by residues 269-271 (DIG), 274-278 (FSDKN), and Lys-355.

This sequence in the N-terminal section; belongs to the IspD/TarI cytidylyltransferase family. IspD subfamily. The protein in the C-terminal section; belongs to the IspF family. A divalent metal cation serves as cofactor.

The catalysed reaction is 2-C-methyl-D-erythritol 4-phosphate + CTP + H(+) = 4-CDP-2-C-methyl-D-erythritol + diphosphate. It catalyses the reaction 4-CDP-2-C-methyl-D-erythritol 2-phosphate = 2-C-methyl-D-erythritol 2,4-cyclic diphosphate + CMP. It participates in isoprenoid biosynthesis; isopentenyl diphosphate biosynthesis via DXP pathway; isopentenyl diphosphate from 1-deoxy-D-xylulose 5-phosphate: step 2/6. The protein operates within isoprenoid biosynthesis; isopentenyl diphosphate biosynthesis via DXP pathway; isopentenyl diphosphate from 1-deoxy-D-xylulose 5-phosphate: step 4/6. In terms of biological role, bifunctional enzyme that catalyzes the formation of 4-diphosphocytidyl-2-C-methyl-D-erythritol from CTP and 2-C-methyl-D-erythritol 4-phosphate (MEP) (IspD), and catalyzes the conversion of 4-diphosphocytidyl-2-C-methyl-D-erythritol 2-phosphate (CDP-ME2P) to 2-C-methyl-D-erythritol 2,4-cyclodiphosphate (ME-CPP) with a corresponding release of cytidine 5-monophosphate (CMP) (IspF). This Pelagibacter ubique (strain HTCC1062) protein is Bifunctional enzyme IspD/IspF.